A 298-amino-acid polypeptide reads, in one-letter code: Thymidylate synthase (298 aa).

DUMP contacts are provided by residues Arg25 and 159–160 (RR). Residue Cys179 is the Nucleophile of the active site. DUMP-binding positions include 200–203 (RSVD), Asn211, and 241–243 (HLY). Residue Asp203 coordinates (6R)-5,10-methylene-5,6,7,8-tetrahydrofolate. Ala297 is a (6R)-5,10-methylene-5,6,7,8-tetrahydrofolate binding site.

Belongs to the thymidylate synthase family. Bacterial-type ThyA subfamily. As to quaternary structure, homodimer.

The protein localises to the cytoplasm. It carries out the reaction dUMP + (6R)-5,10-methylene-5,6,7,8-tetrahydrofolate = 7,8-dihydrofolate + dTMP. The protein operates within pyrimidine metabolism; dTTP biosynthesis. Functionally, catalyzes the reductive methylation of 2'-deoxyuridine-5'-monophosphate (dUMP) to 2'-deoxythymidine-5'-monophosphate (dTMP) while utilizing 5,10-methylenetetrahydrofolate (mTHF) as the methyl donor and reductant in the reaction, yielding dihydrofolate (DHF) as a by-product. This enzymatic reaction provides an intracellular de novo source of dTMP, an essential precursor for DNA biosynthesis. This Cereibacter sphaeroides (strain ATCC 17029 / ATH 2.4.9) (Rhodobacter sphaeroides) protein is Thymidylate synthase.